Reading from the N-terminus, the 842-residue chain is CRM-domain containing factor CFM3, chloroplastic/mitochondrial (842 aa).

Residues 1 to 82 (MAMASSPACH…RSSGRSTMSL (82 aa)) constitute a chloroplast and mitochondrion transit peptide. Disordered regions lie at residues 49–80 (AALDLRPEPSPSSDSDDEDAVGASRSSGRSTM), 141–160 (RFPWERPMPPPEAAPRSARS), and 254–290 (VDYDEPEPTKKSKKNSQSLAMDFPIKGSSNPSLLPTE). Residues 167–263 (LTLPAAELRR…VDYDEPEPTK (97 aa)) form the CRM 1 domain. Over residues 280-290 (GSSNPSLLPTE) the composition is skewed to polar residues. 2 consecutive CRM domains span residues 371–468 (PSLS…ELAE) and 582–682 (ETIT…SSLR). Residues 703-732 (QALSRHFAKLNRKVERLKAELVQMEDVKEQ) adopt a coiled-coil conformation. Positions 768-842 (VAGATADDDG…DRRNHDVNEY (75 aa)) are disordered. Residues 786–812 (DEADYPDSDDEAGDCSEDEGEDDEDEA) are compositionally biased toward acidic residues. The segment covering 831-842 (DTDRRNHDVNEY) has biased composition (basic and acidic residues).

In terms of assembly, interacts with RNA. Part of large ribonucleo-protein particles that contain CAF1 and/or CAF2, and RNC1.

Its subcellular location is the plastid. It localises to the chloroplast stroma. It is found in the mitochondrion. Functionally, binds specific group II introns in chloroplasts and facilitates their splicing. Acts on subgroup IIB introns. The substrates of the subgroup IIB also require the CRM domain proteins CAF1 or CAF2, with a simultaneous binding of CFM3 and CAF1 or CAF2. May influence the biogenesis of the mitochondrial small ribosomal subunit. The chain is CRM-domain containing factor CFM3, chloroplastic/mitochondrial from Zea mays (Maize).